A 367-amino-acid polypeptide reads, in one-letter code: Peptide chain release factor 2 (367 aa).

N5-methylglutamine is present on Gln-254.

The protein belongs to the prokaryotic/mitochondrial release factor family. In terms of processing, methylated by PrmC. Methylation increases the termination efficiency of RF2.

Its subcellular location is the cytoplasm. Its function is as follows. Peptide chain release factor 2 directs the termination of translation in response to the peptide chain termination codons UGA and UAA. The chain is Peptide chain release factor 2 from Leptospira borgpetersenii serovar Hardjo-bovis (strain JB197).